The sequence spans 398 residues: Argininosuccinate synthase (398 aa).

8-16 (AYSGGLDTS) contributes to the ATP binding site. Residue Tyr-87 coordinates L-citrulline. Residue Gly-117 coordinates ATP. Residues Thr-119, Asn-123, and Asp-124 each coordinate L-aspartate. Residue Asn-123 participates in L-citrulline binding. Residues Arg-127, Ser-175, Glu-259, and Tyr-271 each contribute to the L-citrulline site.

This sequence belongs to the argininosuccinate synthase family. Type 1 subfamily. Homotetramer.

The protein resides in the cytoplasm. The enzyme catalyses L-citrulline + L-aspartate + ATP = 2-(N(omega)-L-arginino)succinate + AMP + diphosphate + H(+). Its pathway is amino-acid biosynthesis; L-arginine biosynthesis; L-arginine from L-ornithine and carbamoyl phosphate: step 2/3. This is Argininosuccinate synthase from Corynebacterium kroppenstedtii (strain DSM 44385 / JCM 11950 / CIP 105744 / CCUG 35717).